The sequence spans 96 residues: MTRRLCEIFKSPRRDEMYLYVDRARGLADMPEALLERFGKPVPVTVLMLSEDKPLARAKASDVLAAIEAQGFYLQMPPARESYLLDLYRAPTEGRY.

One can recognise a YcgL domain in the interval 4–88 (RLCEIFKSPR…ARESYLLDLY (85 aa)).

This chain is YcgL domain-containing protein Csal_1462, found in Chromohalobacter salexigens (strain ATCC BAA-138 / DSM 3043 / CIP 106854 / NCIMB 13768 / 1H11).